We begin with the raw amino-acid sequence, 315 residues long: MRMCDRGIQMLITTVGAFAAFSLMTIAVGTDYWLYSRGVCRTKSTSDNETSRKNEEVMTHSGLWRTCCLEGAFRGVCKKIDHFPEDADYEQDTAEYLLRAVRASSVFPILSVTLLFFGGLCVAASEFHRSRHSVILSAGIFFVSAGLSNIIGIIVYISANAGDPGQRDSKKSYSYGWSFYFGAFSFIIAEIVGVVAVHIYIEKHQQLRARSHSELLKKSTFARLPPYRYRFRRRSSSRSTEPRSRDLSPISKGFHTIPSTDISMFTLSRDPSKLTMGTLLNSDRDHAFLQFHNSTPKEFKESLHNNPANRRTTPV.

4 consecutive transmembrane segments (helical) span residues Ile8–Val28, Ser104–Ala124, Ile135–Val155, and Phe181–Ile201. Residues Arg232–Gly253 form a disordered region. At Ser248 the chain carries Phosphoserine.

It belongs to the PMP-22/EMP/MP20 family. CACNG subfamily. In terms of assembly, the L-type calcium channel is composed of five subunits: alpha-1, alpha-2/delta, beta and gamma. Acts as an auxiliary subunit for AMPA-selective glutamate receptors (AMPARs). Found in a complex with GRIA1, GRIA2, GRIA3, GRIA4, CNIH2, CNIH3, CACNG2, CACNG4, CACNG5, CACNG7 and CACNG8. Interacts with AP4M1 and GRIA1; associates GRIA1 with the adaptor protein complex 4 (AP-4) to target GRIA1 to the somatodendritic compartment of neurons.

It is found in the membrane. Regulates the trafficking to the somatodendritic compartment and gating properties of AMPA-selective glutamate receptors (AMPARs). Promotes their targeting to the cell membrane and synapses and modulates their gating properties by slowing their rates of activation, deactivation and desensitization. Does not show subunit-specific AMPA receptor regulation and regulates all AMPAR subunits. Thought to stabilize the calcium channel in an inactivated (closed) state. This chain is Voltage-dependent calcium channel gamma-3 subunit (Cacng3), found in Mus musculus (Mouse).